The primary structure comprises 163 residues: NADH-quinone oxidoreductase subunit I (163 aa).

4Fe-4S ferredoxin-type domains follow at residues 53-83 (LRRY…IEAG) and 94-123 (VRYD…EGPN). The [4Fe-4S] cluster site is built by cysteine 63, cysteine 66, cysteine 69, cysteine 73, cysteine 103, cysteine 106, cysteine 109, and cysteine 113.

Belongs to the complex I 23 kDa subunit family. As to quaternary structure, NDH-1 is composed of 14 different subunits. Subunits NuoA, H, J, K, L, M, N constitute the membrane sector of the complex. The cofactor is [4Fe-4S] cluster.

Its subcellular location is the cell inner membrane. It catalyses the reaction a quinone + NADH + 5 H(+)(in) = a quinol + NAD(+) + 4 H(+)(out). In terms of biological role, NDH-1 shuttles electrons from NADH, via FMN and iron-sulfur (Fe-S) centers, to quinones in the respiratory chain. The immediate electron acceptor for the enzyme in this species is believed to be ubiquinone. Couples the redox reaction to proton translocation (for every two electrons transferred, four hydrogen ions are translocated across the cytoplasmic membrane), and thus conserves the redox energy in a proton gradient. The chain is NADH-quinone oxidoreductase subunit I from Bartonella tribocorum (strain CIP 105476 / IBS 506).